A 199-amino-acid chain; its full sequence is Recombination protein RecR (199 aa).

The C4-type zinc finger occupies 57 to 72; that stretch reads CSICGNITEDDPCVIC. A Toprim domain is found at 80–176; it reads STVLVVEEAK…KVTRLAHGLS (97 aa).

The protein belongs to the RecR family.

Functionally, may play a role in DNA repair. It seems to be involved in an RecBC-independent recombinational process of DNA repair. It may act with RecF and RecO. In Lactiplantibacillus plantarum (strain ATCC BAA-793 / NCIMB 8826 / WCFS1) (Lactobacillus plantarum), this protein is Recombination protein RecR.